We begin with the raw amino-acid sequence, 118 residues long: Urease subunit beta (118 aa).

Belongs to the urease beta subunit family. Heterotrimer of UreA (gamma), UreB (beta) and UreC (alpha) subunits. Three heterotrimers associate to form the active enzyme.

The protein localises to the cytoplasm. The catalysed reaction is urea + 2 H2O + H(+) = hydrogencarbonate + 2 NH4(+). Its pathway is nitrogen metabolism; urea degradation; CO(2) and NH(3) from urea (urease route): step 1/1. The sequence is that of Urease subunit beta from Aliivibrio fischeri (strain MJ11) (Vibrio fischeri).